Consider the following 446-residue polypeptide: Chromosomal replication initiator protein DnaA (446 aa).

A domain I, interacts with DnaA modulators region spans residues 1–92; it reads MENISDLWNS…SQAEEEIDLP (92 aa). Residues 93-109 are domain II; sequence PAKPNAAQDDSNHLPQS. Residues 110–326 form a domain III, AAA+ region region; that stretch reads MLNPKYTFDT…GALIRVVAYS (217 aa). Positions 154, 156, 157, and 158 each coordinate ATP. The interval 327-446 is domain IV, binds dsDNA; sequence SLINKDINAD…QVEEINDILK (120 aa).

Belongs to the DnaA family. In terms of assembly, oligomerizes as a right-handed, spiral filament on DNA at oriC.

Its subcellular location is the cytoplasm. In terms of biological role, plays an essential role in the initiation and regulation of chromosomal replication. ATP-DnaA binds to the origin of replication (oriC) to initiate formation of the DNA replication initiation complex once per cell cycle. Binds the DnaA box (a 9 base pair repeat at the origin) and separates the double-stranded (ds)DNA. Forms a right-handed helical filament on oriC DNA; dsDNA binds to the exterior of the filament while single-stranded (ss)DNA is stabiized in the filament's interior. The ATP-DnaA-oriC complex binds and stabilizes one strand of the AT-rich DNA unwinding element (DUE), permitting loading of DNA polymerase. After initiation quickly degrades to an ADP-DnaA complex that is not apt for DNA replication. Binds acidic phospholipids. The chain is Chromosomal replication initiator protein DnaA from Bacillus anthracis (strain A0248).